We begin with the raw amino-acid sequence, 116 residues long: NADH-ubiquinone oxidoreductase chain 3 (116 aa).

Helical transmembrane passes span L3–F23, F56–L76, and L87–W107.

The protein belongs to the complex I subunit 3 family.

It is found in the mitochondrion membrane. The enzyme catalyses a ubiquinone + NADH + 5 H(+)(in) = a ubiquinol + NAD(+) + 4 H(+)(out). Core subunit of the mitochondrial membrane respiratory chain NADH dehydrogenase (Complex I) that is believed to belong to the minimal assembly required for catalysis. Complex I functions in the transfer of electrons from NADH to the respiratory chain. The immediate electron acceptor for the enzyme is believed to be ubiquinone. The protein is NADH-ubiquinone oxidoreductase chain 3 (MT-ND3) of Oncorhynchus mykiss (Rainbow trout).